Here is an 82-residue protein sequence, read N- to C-terminus: Cytochrome b559 subunit alpha (82 aa).

Residues 22-36 form a helical membrane-spanning segment; the sequence is IIHAVTLPAIFIAGF. Position 24 (histidine 24) interacts with heme.

The protein belongs to the PsbE/PsbF family. In terms of assembly, heterodimer of an alpha subunit and a beta subunit. PSII is composed of 1 copy each of membrane proteins PsbA, PsbB, PsbC, PsbD, PsbE, PsbF, PsbH, PsbI, PsbJ, PsbK, PsbL, PsbM, PsbT, PsbX, PsbY, Psb30/Ycf12, peripheral proteins PsbO, CyanoQ (PsbQ), PsbU, PsbV and a large number of cofactors. It forms dimeric complexes. It depends on heme b as a cofactor.

It is found in the cellular thylakoid membrane. Its function is as follows. This b-type cytochrome is tightly associated with the reaction center of photosystem II (PSII). PSII is a light-driven water:plastoquinone oxidoreductase that uses light energy to abstract electrons from H(2)O, generating O(2) and a proton gradient subsequently used for ATP formation. It consists of a core antenna complex that captures photons, and an electron transfer chain that converts photonic excitation into a charge separation. The chain is Cytochrome b559 subunit alpha from Prochlorococcus marinus (strain MIT 9515).